A 29-amino-acid chain; its full sequence is Conotoxin SIVC (29 aa).

At Ala-1 the chain carries N-acetylalanine; partial. The residue at position 2 (Pro-2) is a 4-hydroxyproline. O-linked (HexNAc...) threonine glycans are attached at residues Thr-7 and Thr-9. Pro-18 and Pro-22 each carry 4-hydroxyproline. Cys-29 is modified (cysteine amide).

This sequence belongs to the conotoxin A superfamily. Post-translationally, O-linked glycans consist of Hex4-HexNAc2 hexasaccharides. In terms of processing, N-terminus is found to be free and N-acetylated, depending on the fraction studied. Contains 3 disulfide bonds. As to expression, expressed by the venom duct. Low expression in the distal venom duct sections.

The protein localises to the secreted. Its function is as follows. Probable neurotoxin with ion channel inhibitor activity. The polypeptide is Conotoxin SIVC (Conus striatus (Striated cone)).